The primary structure comprises 84 residues: Minor capsid protein P30 (84 aa).

In terms of assembly, dimer.

Its subcellular location is the virion. Functionally, minor capsid protein essential for stable capsid assembly of complete particles. This is Minor capsid protein P30 (XXX) from Enterobacteria phage PRD1 (Bacteriophage PRD1).